A 544-amino-acid chain; its full sequence is MSIFIGGAWPYANGSLHLGHIASLLPGDILARYYRAKGENVLYVSGSDCNGTPIAIRAKQEGVTAKDIADQYHEEFERCFRNLGFTYDCYTRTDSEHHHETVQNVFLRLLEEGHIYKKTVEQAYCETCTQFLPDRYVEGICPHCHEAARGDQCDACSAILDPLDLLEKKCKLCGSTPSVQETEHFYFALHTFQEQIKTAVENVKQTGTWRDNAIQLTERYVKEGLQDRAVSRDLPIGVPIPVEGYEDKKIYVWIEAVTGYYSASKHWAEKTGEDDQEFWDSEAKTYYVHGKDNIPFHSVIWPAVLLGIGEGAIPRHIVSNEYLTVEKRKLSTSKNWAVWVPDILERYDPDSIRYFLTVNAPENRDTDFSWREFIYSHNSELLGAYGNFVNRTLKFIEKYYGGIVPKGSIDVELKDKVEGLYKHVGEAIEQTKFKVALESIFDAVRFANKYFDEKQPWKQREDNPVSCEETIYNCVYLIANFVNLLEPFLPFSSERIRNTLSIVNRNWESQHTLPSRIDSVQPLFERIDVKQIEHEVEKLYGAVK.

The short motif at 10 to 20 (PYANGSLHLGH) is the 'HIGH' region element. Positions 141, 144, 153, and 156 each coordinate Zn(2+). The 'KMSKS' region motif lies at 329-333 (KLSTS). Thr-332 is a binding site for ATP.

Belongs to the class-I aminoacyl-tRNA synthetase family. MetG type 1 subfamily. As to quaternary structure, monomer. Requires Zn(2+) as cofactor.

It localises to the cytoplasm. The enzyme catalyses tRNA(Met) + L-methionine + ATP = L-methionyl-tRNA(Met) + AMP + diphosphate. Functionally, is required not only for elongation of protein synthesis but also for the initiation of all mRNA translation through initiator tRNA(fMet) aminoacylation. The polypeptide is Methionine--tRNA ligase (Bacillus cereus (strain Q1)).